The sequence spans 282 residues: MAQHVKKPEWLKIRLGGNEKFTETKSIVEGHCLHTICTSGKCPNMGECWSRGTATFMIGGDICTRACRFCNTLTGRPKPLNEAEPTHVALSIKLMGLNHAVVTSVDRDDLPDYGATHWVKTIQEIRRINSGVTLEVLIPDFKGRMDLVDMIIEASPDVISHNLETVRRLTPSVRSVATYDTSLAVLRHIAQSGKMPAKTGMMLGLGETEEEILELMDDALAAGVSVITIGQYLQPSRKNLPVVEYITPEQFEHLRLVGIEKGFRTIESAPLVRSSYHAERHL.

[4Fe-4S] cluster is bound by residues Cys-37, Cys-42, Cys-48, Cys-63, Cys-67, Cys-70, and Ser-275. A Radical SAM core domain is found at Trp-49–Arg-264.

This sequence belongs to the radical SAM superfamily. Lipoyl synthase family. [4Fe-4S] cluster serves as cofactor.

The protein localises to the cytoplasm. The enzyme catalyses [[Fe-S] cluster scaffold protein carrying a second [4Fe-4S](2+) cluster] + N(6)-octanoyl-L-lysyl-[protein] + 2 oxidized [2Fe-2S]-[ferredoxin] + 2 S-adenosyl-L-methionine + 4 H(+) = [[Fe-S] cluster scaffold protein] + N(6)-[(R)-dihydrolipoyl]-L-lysyl-[protein] + 4 Fe(3+) + 2 hydrogen sulfide + 2 5'-deoxyadenosine + 2 L-methionine + 2 reduced [2Fe-2S]-[ferredoxin]. It functions in the pathway protein modification; protein lipoylation via endogenous pathway; protein N(6)-(lipoyl)lysine from octanoyl-[acyl-carrier-protein]: step 2/2. Catalyzes the radical-mediated insertion of two sulfur atoms into the C-6 and C-8 positions of the octanoyl moiety bound to the lipoyl domains of lipoate-dependent enzymes, thereby converting the octanoylated domains into lipoylated derivatives. The chain is Lipoyl synthase from Porphyromonas gingivalis (strain ATCC 33277 / DSM 20709 / CIP 103683 / JCM 12257 / NCTC 11834 / 2561).